The following is a 641-amino-acid chain: MDSFNYCVQCNPEENWLELEFRSENDEPIDGLLVTITNQSAPSNTYTQTTSSGKVLFGKIAAGEWRASVSQASLLTEVEKYASRKEGQESPVKKRAAAELDAADKDTKQYRFTTIGDFWDEAPKDEFLQKQHKGIDVNASAEKAGFRLSHNQTYVFEIKALRSYMPVIIDTDEFNLVNSYTFALLSKLAYATNDFNRDDGKTIDNQGAISTVISQLKRKERPTYSGDLQAKWLLEEIPYSKALSAQYYAEDDVGSEGYIIFNDELAIIGVRGTEPYFQSKKPPVDNTKFKIIKAASGMAAVIADKIESATDSPGMKDLIITDLDAAQIAPEEFGGTYVHRGFYQYTMALLSLMEKDLGLHKIKKFYCCGHSLGGAGALLISALIKDSYHPPVLRLYTYGMPRVGTRSFVERYQNILHYRHVNNHDLVPQIPTVWMNTDVSEGFHVLDVFKSRVDLMRKMLTDDDDDNYQHHGHLSQLLTYNSNNQVLLTPKQTQVTMLDLANLATNDSVAMVDGLSDASIVEHGMEQYIPNLFEQLTALSDESLMVHYQRAISALEQEIATLQQSYLTVKQAWIESIGNGTPTMNIGRLMSEMHSINKLIENRNKIRGELRQIVSDPQRMPATKFLISQQTLPDEIKVQIR.

Interacts with VgrG3; this interaction allows TseL secretion to target cells.

Its subcellular location is the secreted. In terms of biological role, toxin secreted by the type VI (T6SS) secretion system that acts on prokaryotic as well as eukaryotic target cells. This Vibrio cholerae serotype O1 (strain ATCC 39315 / El Tor Inaba N16961) protein is Toxin TseL.